The primary structure comprises 172 residues: MFKEEIVVEHLVNVNRVTKVVKGGRRFSFSACVVLGNKAGKVGYGHGKAKEVGEARLKALQNAKKYMIEVPLYKGRTIHYDVYGKSGAAKVMLRRARAGTGIIAGGAMRFIFDSLGIQDVVAKSFGSSNSYLMIAATLNALKQLETPRVIAERRGLRLNELSVTIYKTFHEG.

Positions 7–70 (VVEHLVNVNR…QNAKKYMIEV (64 aa)) constitute an S5 DRBM domain.

The protein belongs to the universal ribosomal protein uS5 family. In terms of assembly, part of the 30S ribosomal subunit. Contacts proteins S4 and S8.

With S4 and S12 plays an important role in translational accuracy. In terms of biological role, located at the back of the 30S subunit body where it stabilizes the conformation of the head with respect to the body. The sequence is that of Small ribosomal subunit protein uS5 from Orientia tsutsugamushi (strain Boryong) (Rickettsia tsutsugamushi).